Reading from the N-terminus, the 158-residue chain is MKILVIQGPNLNILGHREPHIYGNFTLDQIHNNLQAQAKQNNAELEFFQSNFEGEIIDKLQECIGGEYAGVLINPAAFSHTSIAIADAIASCGVPVIEVHISNIHAREEYRSKSYTGAVSAGVITGFGAFGYHLALMGILQIANEIAALKAQQNNQNA.

The active-site Proton acceptor is the tyrosine 22. Substrate-binding residues include asparagine 74, histidine 80, and aspartate 87. The Proton donor role is filled by histidine 100. Residues 101–102 (IS) and arginine 111 contribute to the substrate site.

Belongs to the type-II 3-dehydroquinase family. In terms of assembly, homododecamer.

It carries out the reaction 3-dehydroquinate = 3-dehydroshikimate + H2O. It functions in the pathway metabolic intermediate biosynthesis; chorismate biosynthesis; chorismate from D-erythrose 4-phosphate and phosphoenolpyruvate: step 3/7. Its function is as follows. Catalyzes a trans-dehydration via an enolate intermediate. In Helicobacter hepaticus (strain ATCC 51449 / 3B1), this protein is 3-dehydroquinate dehydratase.